We begin with the raw amino-acid sequence, 546 residues long: Calcitonin receptor-like protein 1 (546 aa).

Over 1 to 171 the chain is Cytoplasmic; sequence MADATSPFNV…EVARNARKLE (171 aa). Residues 172–192 form a helical membrane-spanning segment; it reads FVGLGLSLVSLILAISIFSYF. At 193-205 the chain is on the extracellular side; it reads RRLRVFRNLLHLH. A helical membrane pass occupies residues 206-226; it reads LMIAMLMVVILRLVLYIDLIF. The Cytoplasmic portion of the chain corresponds to 227-251; that stretch reads TGENGPHTNSAEGKTINTMPIVCEG. Residues 252–272 form a helical membrane-spanning segment; sequence MFFFLEYFKTVTFCWMFLEGI. Residues 273 to 292 lie on the Extracellular side of the membrane; it reads YLNNQIVFGFFNSEPKLLPY. The helical transmembrane segment at 293–313 threads the bilayer; the sequence is FIAGYGIPLVHTMLWLLVVLI. The Cytoplasmic segment spans residues 314–333; the sequence is KKDFKVERCLGSYYLEPEFW. A helical transmembrane segment spans residues 334-354; sequence ILDGPRMAELVINLFFICNVI. Residues 355–377 lie on the Extracellular side of the membrane; that stretch reads RVLYSKVRESNNTSEAGLKKSVK. Residues N365 and N366 are each glycosylated (N-linked (GlcNAc...) asparagine). A helical transmembrane segment spans residues 378-398; it reads AAMMLLPLLGVPNIMQTIPFA. Residues 399-403 are Cytoplasmic-facing; the sequence is PTRDN. The chain crosses the membrane as a helical span at residues 404–424; sequence IMVFAVWTYTASFTYMYQGLM. Residues 425 to 546 lie on the Extracellular side of the membrane; it reads VASIYCFTNK…EGSNRSTKSP (122 aa). N-linked (GlcNAc...) asparagine glycosylation is found at N472 and N476. The interval 472–546 is disordered; it reads NGTANASAPQ…EGSNRSTKSP (75 aa). The segment covering 473–485 has biased composition (polar residues); sequence GTANASAPQTNNA. A compositionally biased stretch (basic and acidic residues) spans 500–520; the sequence is KGSDDSTTKLMKDAVMEEEKN. The N-linked (GlcNAc...) asparagine glycan is linked to N540.

The protein belongs to the G-protein coupled receptor 2 family. As to expression, expression was observed in the mechanosensory neuron pairs PLM, ALM, FLP, OLQD, and OLQV, the chemosensory neurons PHA, PHB, RMEV, the ring motor neurons RMED, and the pharyngeal interneuron pair I1. Expression in sensory neurons PHA, PQR and URY are responsible for mate searching behavior. Expressed in AIY, RIM, RIA, and other neurons.

Its subcellular location is the cell membrane. In terms of biological role, G-protein coupled receptor for PDF neuropeptides. Plays a role in responses to environmental signals, including chemicals and touch, and in modulating locomotory behaviors. Capable of transducing signals via an adenylate cyclase acy-1 cAMP-dependent pathway. Required to regulate the sex-specific expression of TGFbeta-like daf-7 in the ASJ chemosensory neurons, perhaps acting via acy-1. Involved in modulating mate searching behavior independent of nutritional status. In the presence of food, plays a role in initiating and extending exploratory roaming behavior, perhaps acting in AIY, RIM, RIA, and other neurons, in opposition to 5-hydroxytryptamine (serotonin) signaling. Involved in mediating arousal from the sleep-like state called lethargus, which occurs during molting between larval and adult stages, in part by regulating touch sensitivity. May play a role in circadian rhythms of locomotor activity. Functionally, G-protein coupled receptor which is activated by neuropeptides PDF-1 and PDF-2. Probably acts through the G-alpha(s) type of G proteins to elevate cAMP levels. Its function is as follows. G-protein coupled receptor which is activated by neuropeptides PDF-1 and PDF-2; however, activation is lower compared to isoforms a and b. Probably inhibits cAMP levels through the G-alpha(i/o) type of G proteins. In Caenorhabditis elegans, this protein is Calcitonin receptor-like protein 1 (pdfr-1).